The following is a 330-amino-acid chain: MAPISHTRISLSMYNSWIRYFCRTGETNEAMSLLAEIHSLGSRPDPLSYVSFIETLASLRRTLEADALFHEVVRFMIYGSYSVRLYNALVSRYLRKEVSWRVVNEMKKRKFRLNSFVYGKIIRIYRDNGMWKKALGIVEEIREIGLPMDVEIYNSVIDTFGKYGELDEELQVLEKLQRSSDSRPNIRTWNSLIRWHCHHGAVDMALELFTMIFEDIGELVGKLKSQGVAPSANLFCTLANAYAQQGLCKQTVKVLKMMENEGIEPNLIMLNVLINAFGTAGKHMEALSIYHHIKETVWIHPDVVTYSTLMKAFTRAKKYEMVCSFYLVTL.

PPR repeat units follow at residues 10 to 44 (SLSM…GSRP), 45 to 75 (DPLS…VVRF), 83 to 113 (VRLY…KFRL), 114 to 148 (NSFV…GLPM), 149 to 179 (DVEI…LQRS), 185 to 215 (NIRT…IFED), 231 to 265 (SANL…GIEP), 266 to 296 (NLIM…IKET), and 302 to 330 (DVVT…LVTL).

This sequence belongs to the PPR family. P subfamily.

The polypeptide is Putative pentatricopeptide repeat-containing protein At5g36300 (Arabidopsis thaliana (Mouse-ear cress)).